A 237-amino-acid polypeptide reads, in one-letter code: Uridylate kinase (237 aa).

Residue 9 to 12 (KFSG) participates in ATP binding. The interval 17–22 (GEAGYG) is involved in allosteric activation by GTP. G51 lines the UMP pocket. The ATP site is built by G52 and R56. Residues D72 and 133–140 (TGNPFFTT) contribute to the UMP site. T160, Y166, and D169 together coordinate ATP.

This sequence belongs to the UMP kinase family. In terms of assembly, homohexamer.

The protein resides in the cytoplasm. The enzyme catalyses UMP + ATP = UDP + ADP. The protein operates within pyrimidine metabolism; CTP biosynthesis via de novo pathway; UDP from UMP (UMPK route): step 1/1. Allosterically activated by GTP. Inhibited by UTP. Catalyzes the reversible phosphorylation of UMP to UDP. This Sulfurimonas denitrificans (strain ATCC 33889 / DSM 1251) (Thiomicrospira denitrificans (strain ATCC 33889 / DSM 1251)) protein is Uridylate kinase.